Consider the following 351-residue polypeptide: Pinopsin (351 aa).

At Met1–Thr30 the chain is on the extracellular side. N-linked (GlcNAc...) asparagine glycosylation occurs at Asn4. A helical transmembrane segment spans residues Tyr31 to Val55. At Ser56–Asn67 the chain is on the cytoplasmic side. Residues Tyr68–Asn92 traverse the membrane as a helical segment. The Extracellular segment spans residues Ile93 to Glu107. A disulfide bridge connects residues Cys104 and Cys181. A helical transmembrane segment spans residues Gly108–Leu127. The Cytoplasmic segment spans residues Glu128–His146. The chain crosses the membrane as a helical span at residues Ala147–Ser170. The Extracellular portion of the chain corresponds to Ser171–Ser194. Asn192 carries N-linked (GlcNAc...) asparagine glycosylation. Residues Tyr195–Leu222 traverse the membrane as a helical segment. Residues Arg223–Arg244 lie on the Cytoplasmic side of the membrane. Residues Met245–Ala268 traverse the membrane as a helical segment. Residues Thr269 to Gln276 lie on the Extracellular side of the membrane. A helical membrane pass occupies residues Pro277–Met301. An N6-(retinylidene)lysine modification is found at Lys288. The Cytoplasmic segment spans residues Asn302–Val351. S-palmitoyl cysteine attachment occurs at residues Cys314 and Cys315.

Belongs to the G-protein coupled receptor 1 family. Opsin subfamily. Post-translationally, phosphorylated on some or all of the serine and threonine residues present in the C-terminal region. Pineal gland.

It is found in the membrane. Produces a slow and prolonged phototransduction response consistent with the non-visual function of pineal photoreception. The protein is Pinopsin of Gallus gallus (Chicken).